We begin with the raw amino-acid sequence, 117 residues long: Immunoglobulin heavy variable 7-4-1 (117 aa).

The signal sequence occupies residues 1-19; sequence MDWTWRILFLVAAATGAHS. Positions 20 to 44 are framework-1; that stretch reads QVQLVQSGSELKKPGASVKVSCKAS. The Ig-like domain maps to 20-117; that stretch reads QVQLVQSGSE…EDTAVYYCAR (98 aa). A disulfide bridge links Cys41 with Cys115. A complementarity-determining-1 region spans residues 45 to 52; the sequence is GYTFTSYA. The interval 53 to 69 is framework-2; that stretch reads MNWVRQAPGQGLEWMGW. Positions 70 to 77 are complementarity-determining-2; it reads INTNTGNP. The interval 78–115 is framework-3; sequence TYAQGFTGRFVFSLDTSVSTAYLQICSLKAEDTAVYYC. The complementarity-determining-3 stretch occupies residues 116–117; that stretch reads AR.

As to quaternary structure, immunoglobulins are composed of two identical heavy chains and two identical light chains; disulfide-linked.

The protein resides in the secreted. The protein localises to the cell membrane. Functionally, v region of the variable domain of immunoglobulin heavy chains that participates in the antigen recognition. Immunoglobulins, also known as antibodies, are membrane-bound or secreted glycoproteins produced by B lymphocytes. In the recognition phase of humoral immunity, the membrane-bound immunoglobulins serve as receptors which, upon binding of a specific antigen, trigger the clonal expansion and differentiation of B lymphocytes into immunoglobulins-secreting plasma cells. Secreted immunoglobulins mediate the effector phase of humoral immunity, which results in the elimination of bound antigens. The antigen binding site is formed by the variable domain of one heavy chain, together with that of its associated light chain. Thus, each immunoglobulin has two antigen binding sites with remarkable affinity for a particular antigen. The variable domains are assembled by a process called V-(D)-J rearrangement and can then be subjected to somatic hypermutations which, after exposure to antigen and selection, allow affinity maturation for a particular antigen. The polypeptide is Immunoglobulin heavy variable 7-4-1 (Homo sapiens (Human)).